The sequence spans 241 residues: uncharacterized protein (241 aa).

6 helical membrane passes run 1-21 (MMMA…GILL), 43-63 (FPII…LKNL), 75-95 (LPIY…FYAI), 108-128 (IYVL…VLML), 160-180 (VLTS…HGLL), and 200-220 (ILVI…IASG).

This sequence to M.jannaschii MJ0871, MJ0880 and MJ1556.

The protein localises to the cell membrane. This is an uncharacterized protein from Methanocaldococcus jannaschii (strain ATCC 43067 / DSM 2661 / JAL-1 / JCM 10045 / NBRC 100440) (Methanococcus jannaschii).